A 740-amino-acid chain; its full sequence is ATP-dependent RNA helicase DDX1 (740 aa).

Residues 1 to 295 are necessary for interaction with HNRNPK; that stretch reads MAAFSEMGVM…APKALIVEPS (295 aa). Residues 1–448 are interaction with dsRNA; the sequence is MAAFSEMGVM…DTVHHVVVPV (448 aa). The interval 1–525 is necessary for interaction with RELA; the sequence is MAAFSEMGVM…KIDCDNLEQY (525 aa). The Helicase ATP-binding domain maps to 2–428; the sequence is AAFSEMGVMP…SEKIMHFPTW (427 aa). 46–53 contacts ATP; it reads AETGSGKT. A B30.2/SPRY domain is found at 70–247; the sequence is DQQEGKKGKA…LKFNFGEEEF (178 aa). An N6-acetyllysine mark is found at Lys239 and Lys268. At Lys281 the chain carries N6-acetyllysine; alternate. Lys281 participates in a covalent cross-link: Glycyl lysine isopeptide (Lys-Gly) (interchain with G-Cter in SUMO2); alternate. Residues 370–373 carry the DEAD box motif; the sequence is DEAD. Residue Ser481 is modified to Phosphoserine. One can recognise a Helicase C-terminal domain in the interval 493–681; it reads KGEYAVRAIK…QVEPDIKVPV (189 aa). The interval 525-740 is necessary for interaction with HNRNPK; the sequence is YFMQQGGGPD…YLPNQLFRTF (216 aa).

It belongs to the DEAD box helicase family. DDX1 subfamily. In terms of assembly, found in a multi-helicase-TICAM1 complex at least composed of DHX36, DDX1, DDX21 and TICAM1; this complex exists in resting cells with or without poly(I:C) RNA ligand stimulation. Interacts with DHX36. Interacts (via B30.2/SPRY domain) with DDX21 (via N-terminus); this interaction serves as bridges to TICAM1. Interacts with FAM98A (via N- and C-terminus). Interacts with PHF5A (via C-terminus). Interacts with MBNL1. Interacts with CSTF2. Interacts with HNRNPK. Interacts with ATM. Interacts with RELA (via C-terminus). Component of the tRNA-splicing ligase complex. Interacts with PQBP1. Interacts with ERCC6. In terms of processing, phosphorylated by ATM kinase; phosphorylation is increased in response to ionizing radiation (IR).

It is found in the nucleus. Its subcellular location is the cytoplasm. It localises to the cytoplasmic granule. The protein resides in the cytosol. The protein localises to the mitochondrion. It catalyses the reaction ATP + H2O = ADP + phosphate + H(+). Its function is as follows. Acts as an ATP-dependent RNA helicase, able to unwind both RNA-RNA and RNA-DNA duplexes. Possesses 5' single-stranded RNA overhang nuclease activity. Possesses ATPase activity on various RNA, but not DNA polynucleotides. May play a role in RNA clearance at DNA double-strand breaks (DSBs), thereby facilitating the template-guided repair of transcriptionally active regions of the genome. Together with RELA, acts as a coactivator to enhance NF-kappa-B-mediated transcriptional activation. Acts as a positive transcriptional regulator of cyclin CCND2 expression. Binds to the cyclin CCND2 promoter region. Associates with chromatin at the NF-kappa-B promoter region via association with RELA. Binds to poly(A) RNA. May be involved in 3'-end cleavage and polyadenylation of pre-mRNAs. Component of the tRNA-splicing ligase complex required to facilitate the enzymatic turnover of catalytic subunit RTCB: together with archease (ZBTB8OS), acts by facilitating the guanylylation of RTCB, a key intermediate step in tRNA ligation. Component of a multi-helicase-TICAM1 complex that acts as a cytoplasmic sensor of viral double-stranded RNA (dsRNA) and plays a role in the activation of a cascade of antiviral responses including the induction of pro-inflammatory cytokines via the adapter molecule TICAM1. Specifically binds (via helicase ATP-binding domain) on both short and long poly(I:C) dsRNA. This chain is ATP-dependent RNA helicase DDX1 (Ddx1), found in Rattus norvegicus (Rat).